A 762-amino-acid chain; its full sequence is Probable inorganic carbon transporter subunit DabA (762 aa).

Residues cysteine 279, aspartate 281, histidine 461, and cysteine 476 each coordinate Zn(2+).

This sequence belongs to the inorganic carbon transporter (TC 9.A.2) DabA family. Forms a complex with DabB. Zn(2+) serves as cofactor.

It localises to the cell inner membrane. Its function is as follows. Part of an energy-coupled inorganic carbon pump. This chain is Probable inorganic carbon transporter subunit DabA, found in Legionella pneumophila (strain Corby).